The primary structure comprises 55 residues: uncharacterized protein (55 aa).

This is an uncharacterized protein from Dictyostelium discoideum (Social amoeba).